A 486-amino-acid polypeptide reads, in one-letter code: Cephamycin export protein CmcT (486 aa).

The next 14 helical transmembrane spans lie at 24-44 (VLACTAHFLVVFDTSVITVAL), 56-76 (ASLQWVVNSYTLAFAGLLLFG), 88-108 (VFLGGLAVFTLTSLIGGLATS), 121-141 (AGAAVLAPLAVTMLTTSFAEG), 153-173 (AVALVGGASGNLLGGVFTEFL), 178-198 (VLLVNVPIGIPVLFLAARVLA), 210-230 (LDLPGAVLATAGLTLLTLGVS), 241-261 (AVAVPLAGGLLALLAFVVVEA), 284-304 (LAMLLAGASQVPVWFFLTLSM), 317-337 (LGFVPHALVMLVVGLRVVPWL), 345-365 (VLIAAGAAIGALGFWWQSLLT), 369-389 (AYLGGILGPAVLISIGGGLVG), 418-438 (FGGAFGLAVLLTVTGSGTSGS), and 450-470 (FVGIAVFMLAIAVLTPVLPAL).

Belongs to the major facilitator superfamily.

Its subcellular location is the cell membrane. Functionally, involved in cephamycin export. The chain is Cephamycin export protein CmcT (cmcT) from Amycolatopsis lactamdurans (Nocardia lactamdurans).